The following is a 276-amino-acid chain: Rhomboid protease GlpG (276 aa).

6 consecutive transmembrane segments (helical) span residues 94–114 (GPVT…MQIL), 142–162 (ALMH…WYLG), 169–189 (LGSG…GYVQ), 192–212 (FSGP…GYVW), 229–249 (LIIF…GMSM), and 250–270 (ANGA…VDSL). Serine 201 (nucleophile) is an active-site residue. Histidine 254 is a catalytic residue.

This sequence belongs to the peptidase S54 family.

The protein resides in the cell inner membrane. The enzyme catalyses Cleaves type-1 transmembrane domains using a catalytic dyad composed of serine and histidine that are contributed by different transmembrane domains.. In terms of biological role, rhomboid-type serine protease that catalyzes intramembrane proteolysis. The polypeptide is Rhomboid protease GlpG (Escherichia coli O81 (strain ED1a)).